Here is a 377-residue protein sequence, read N- to C-terminus: Guanine nucleotide-binding protein subunit beta (377 aa).

WD repeat units follow at residues 63–93 (GHTGKVYSLDWTPERNRIVSASQDGRLIVWN), 105–135 (LPCAWVMTCAFSPNGQSVACGGLDSVCSIFS), 154–185 (GHRGYVSCCQYVPNEDAHLITSSGDQTCILWD), 202–233 (GHTADVLSVSISGSNPNWFISGSCDSTARLWD), 246–276 (GHEGDVNTVKFFPDGYRFGTGSDDGTCRLYD), 292–323 (GENGPVTSIAFSVSGRLLFAGYASNNTCYVWD), and 339–369 (SHRNRISCLGLSADGSALCTGSWDSNLKIWA). 2 short sequence motifs (DWD box) span residues 220–235 (FISGSCDSTARLWDTR) and 263–278 (FGTGSDDGTCRLYDIR).

The protein belongs to the WD repeat G protein beta family. As to quaternary structure, g proteins are composed of 3 units, alpha, beta and gamma. Interacts with the gamma subunits GG1 and GG2. The dimers GB1-GG1 and GB1-GG2 interact with NDL1, NDL2 and NDL3. Interacts with WNK8. Interacts with XLG2. Interacts with RACK1A, RACK1B and RACK1C. Interacts with ZAR1 (via GBeta-binding domain). In terms of tissue distribution, expressed in seedlings (especially at the hypocotyl/root junction), roots, leaves (restricted to veins and guard cells), and flowers. Also present in hydathods. Expressed in guard cells, mesophyll tissue of cotyledons, trichomes and whole siliques, but not in seeds.

It is found in the cell membrane. The protein localises to the cytoplasm. The protein resides in the nucleus. Its function is as follows. Guanine nucleotide-binding proteins (G proteins) are involved as a modulator or transducer in various transmembrane signaling systems. The beta and gamma chains are required for the GTPase activity, for replacement of GDP by GTP, and for G protein-effector interaction. The heterotrimeric G-protein controls defense responses to necrotrophic and vascular fungi probably by modulating cell wall-related genes expression (e.g. lower xylose content in cell walls); involved in resistance to fungal pathogens such as Alternaria brassicicola and Fusarium oxysporum. Modulates root architecture (e.g. lateral root formation). Acts with XGL3 in the positive regulation of root waving and root skewing. Involved in the asymmetric division of zygote and specification of apical and basal cell lineages. In Arabidopsis thaliana (Mouse-ear cress), this protein is Guanine nucleotide-binding protein subunit beta (GB1).